Here is a 548-residue protein sequence, read N- to C-terminus: Nodulation protein NolO (548 aa).

Belongs to the NodU/CmcH family.

Involved in 6-O-carbamoylation of Nod-factors. The protein is Nodulation protein NolO (nolO) of Bradyrhizobium diazoefficiens (strain JCM 10833 / BCRC 13528 / IAM 13628 / NBRC 14792 / USDA 110).